The following is a 379-amino-acid chain: Putative acetyl-CoA C-acetyltransferase VraB (379 aa).

Cys-86 functions as the Acyl-thioester intermediate in the catalytic mechanism. Residue His-338 is the Proton acceptor of the active site.

It belongs to the thiolase-like superfamily. Thiolase family.

The chain is Putative acetyl-CoA C-acetyltransferase VraB (vraB) from Staphylococcus aureus (strain Mu3 / ATCC 700698).